Here is a 76-residue protein sequence, read N- to C-terminus: Defensin-like protein 125 (76 aa).

An N-terminal signal peptide occupies residues 1–25 (MTKAITLAIFMVVLVLGMVTKETQG). Cystine bridges form between Cys30–Cys74, Cys41–Cys60, Cys46–Cys68, and Cys50–Cys70.

It belongs to the DEFL family.

Its subcellular location is the secreted. The chain is Defensin-like protein 125 (LCR54) from Arabidopsis thaliana (Mouse-ear cress).